A 308-amino-acid chain; its full sequence is D-alanine--D-alanine ligase (308 aa).

Residues 103–302 (KTVMATAGVP…FDELVQWMVE (200 aa)) form the ATP-grasp domain. 130–184 (MAPPYVIKPVADGSSVGVFMVTEAHEHPPQELFRDDWPHGEQLLVEKYVAGKELT) serves as a coordination point for ATP. Mg(2+) is bound by residues Asp-252, Glu-269, and Asn-271.

This sequence belongs to the D-alanine--D-alanine ligase family. It depends on Mg(2+) as a cofactor. The cofactor is Mn(2+).

It is found in the cytoplasm. The catalysed reaction is 2 D-alanine + ATP = D-alanyl-D-alanine + ADP + phosphate + H(+). The protein operates within cell wall biogenesis; peptidoglycan biosynthesis. Cell wall formation. The sequence is that of D-alanine--D-alanine ligase from Rhodopseudomonas palustris (strain BisB18).